Here is a 632-residue protein sequence, read N- to C-terminus: tRNA uridine 5-carboxymethylaminomethyl modification enzyme MnmG (632 aa).

Residues 15–20 (GAGHAG), Ile-127, and Ser-182 contribute to the FAD site. 276-290 (GPRYCPSIEDKIVRF) is a binding site for NAD(+). FAD is bound at residue Gln-373.

The protein belongs to the MnmG family. Homodimer. Heterotetramer of two MnmE and two MnmG subunits. Requires FAD as cofactor.

The protein resides in the cytoplasm. In terms of biological role, NAD-binding protein involved in the addition of a carboxymethylaminomethyl (cmnm) group at the wobble position (U34) of certain tRNAs, forming tRNA-cmnm(5)s(2)U34. The protein is tRNA uridine 5-carboxymethylaminomethyl modification enzyme MnmG of Streptococcus pyogenes serotype M4 (strain MGAS10750).